The primary structure comprises 291 residues: Phosphatidylglycerol--prolipoprotein diacylglyceryl transferase (291 aa).

7 helical membrane passes run 21–41 (VSLH…MWLA), 60–80 (LLYA…VLFY), 96–116 (WDGG…MIIF), 130–150 (FIAP…FING), 198–218 (SQLY…NLFI), 225–245 (GSVS…VEFF), and 260–280 (ISMG…MMVW). Arg-143 is a binding site for a 1,2-diacyl-sn-glycero-3-phospho-(1'-sn-glycerol).

The protein belongs to the Lgt family.

The protein localises to the cell inner membrane. It carries out the reaction L-cysteinyl-[prolipoprotein] + a 1,2-diacyl-sn-glycero-3-phospho-(1'-sn-glycerol) = an S-1,2-diacyl-sn-glyceryl-L-cysteinyl-[prolipoprotein] + sn-glycerol 1-phosphate + H(+). Its pathway is protein modification; lipoprotein biosynthesis (diacylglyceryl transfer). Functionally, catalyzes the transfer of the diacylglyceryl group from phosphatidylglycerol to the sulfhydryl group of the N-terminal cysteine of a prolipoprotein, the first step in the formation of mature lipoproteins. This is Phosphatidylglycerol--prolipoprotein diacylglyceryl transferase from Klebsiella pneumoniae (strain 342).